The following is a 323-amino-acid chain: Tetraacyldisaccharide 4'-kinase (323 aa).

Residue T56–T63 coordinates ATP.

Belongs to the LpxK family.

The enzyme catalyses a lipid A disaccharide + ATP = a lipid IVA + ADP + H(+). Its pathway is glycolipid biosynthesis; lipid IV(A) biosynthesis; lipid IV(A) from (3R)-3-hydroxytetradecanoyl-[acyl-carrier-protein] and UDP-N-acetyl-alpha-D-glucosamine: step 6/6. In terms of biological role, transfers the gamma-phosphate of ATP to the 4'-position of a tetraacyldisaccharide 1-phosphate intermediate (termed DS-1-P) to form tetraacyldisaccharide 1,4'-bis-phosphate (lipid IVA). The chain is Tetraacyldisaccharide 4'-kinase from Legionella pneumophila (strain Corby).